Here is a 273-residue protein sequence, read N- to C-terminus: DnaJ homolog subfamily C member 27 (273 aa).

Residues 1 to 18 (METNVPKRKEPAKSLRIK) are required for interaction with MAPK1. GTP-binding positions include 23–30 (GNAEVGKS), 71–75 (DMAGH), and 134–137 (NKID). Residues 217–273 (DSWEMLGVRPGASREEVNKAYRKLAVLLHPDKCVAPGSEDAFKAVVNARTALLKNIK) form the J domain.

This sequence belongs to the small GTPase superfamily. Rab family. As to quaternary structure, interacts directly with MAPK1 (wild-type and kinase-deficient forms). Interacts directly (in GTP-bound form) with MAP2K1 (wild-type and kinase-deficient forms).

Its subcellular location is the nucleus. In terms of biological role, GTPase which can activate the MEK/ERK pathway and induce cell transformation when overexpressed. May act as a nuclear scaffold for MAPK1, probably by association with MAPK1 nuclear export signal leading to enhanced ERK1/ERK2 signaling. The chain is DnaJ homolog subfamily C member 27 (Dnajc27) from Mus musculus (Mouse).